Here is a 301-residue protein sequence, read N- to C-terminus: J domain-containing protein 1 (301 aa).

Residues 58–150 (TPYDIFGIPK…KKKIVYDTTR (93 aa)) enclose the J domain. Residues 208–228 (WTVIGIICGLAICIEGTALLA) form a helical membrane-spanning segment.

The protein belongs to the DnaJ family.

Its subcellular location is the mitochondrion membrane. In terms of biological role, probable chaperone. The protein is J domain-containing protein 1 (JID1) of Saccharomyces cerevisiae (strain ATCC 204508 / S288c) (Baker's yeast).